We begin with the raw amino-acid sequence, 235 residues long: DnaA regulatory inactivator Hda (235 aa).

This sequence belongs to the DnaA family. HdA subfamily. The active form seems to be an ADP-bound monomer. Forms the RIDA complex (regulatory inactivation of DnaA) of ATP-DnaA, ADP-Hda and the DNA-loaded beta sliding clamp (dnaN).

Functionally, mediates the interaction of DNA replication initiator protein DnaA with DNA polymerase subunit beta sliding clamp (dnaN). Stimulates hydrolysis of ATP-DnaA to ADP-DnaA, rendering DnaA inactive for reinitiation, a process called regulatory inhibition of DnaA or RIDA. The chain is DnaA regulatory inactivator Hda from Yersinia pestis bv. Antiqua (strain Antiqua).